A 222-amino-acid chain; its full sequence is 2-hydroxypent-2,4-dienoate hydratase (222 aa).

The protein belongs to the hydratase/decarboxylase family.

It functions in the pathway aromatic compound metabolism; benzoate degradation via hydroxylation. In terms of biological role, conversion of 2-hydroxypent-2,4-dienoate into 4-hydroxy-2-oxopentanoate. This chain is 2-hydroxypent-2,4-dienoate hydratase (xylJ), found in Pseudomonas putida (Arthrobacter siderocapsulatus).